We begin with the raw amino-acid sequence, 146 residues long: Antiholin-like protein LrgA (146 aa).

Helical transmembrane passes span 7–29, 34–53, 65–87, and 97–119; these read YGFL…IAAI, IPAS…LKVI, LTSL…LGVM, and VILL…ILSL.

The protein belongs to the CidA/LrgA family. LrgA subfamily.

The protein resides in the cell membrane. Functionally, inhibits the expression or activity of extracellular murein hydrolases by interacting, possibly with LrgB, with the holin-like protein CidA. The LrgAB and CidA proteins may affect the proton motive force of the membrane. May be involved in programmed cell death (PCD), possibly triggering PCD in response to antibiotics and environmental stresses. The polypeptide is Antiholin-like protein LrgA (Bacillus subtilis (strain 168)).